Here is a 628-residue protein sequence, read N- to C-terminus: Dual specificity testis-specific protein kinase 1 (628 aa).

Residues 1 to 35 form a disordered region; the sequence is MAGERPPLRGPGPGETPVEGPGGAGGGPGRGRPSS. A compositionally biased stretch (gly residues) spans 20-30; sequence GPGGAGGGPGR. In terms of domain architecture, Protein kinase spans 52-310; sequence FDCAEKIGAG…EITQHLEQIL (259 aa). Residues 58–66 and K81 contribute to the ATP site; that span reads IGAGFFSEV. D170 acts as the Proton acceptor in catalysis. S215 carries the post-translational modification Phosphoserine; by autocatalysis. Disordered stretches follow at residues 330 to 376, 424 to 490, and 538 to 568; these read TYNQ…DNLT, PESL…QLPL, and RAQH…EEGL. An Omega-N-methylarginine modification is found at R338. The segment covering 348-357 has biased composition (basic and acidic residues); that stretch reads SDPRLSRSRS. The required for interaction with YWHAB stretch occupies residues 421–526; the sequence is VASPESLVQP…NNNPPAVVVN (106 aa). S439 is subject to Phosphoserine. Residues 478 to 487 show a composition bias toward pro residues; it reads EPEPPGPAPQ. Residues 529 to 626 are required for interaction with PARVA; that stretch reads QGWAREPWNR…PTPSLQLPGA (98 aa). The required for interaction with SPRED1 and SPRY2. Required for TESK1-mediated dephosphorylation of SPRY2 and SPRY2 inhibition of ERK phosphorylation stretch occupies residues 529–628; that stretch reads QGWAREPWNR…PSLQLPGARS (100 aa).

It belongs to the protein kinase superfamily. TKL Ser/Thr protein kinase family. In terms of assembly, interacts (via both C- and N-termini) with SPRY4 (via C-terminus); the interaction inhibits TESK1 kinase activity. Interacts with TAOK1; the interaction inhibits TAOK1 kinase activity. Interacts (via C-terminus) with SPRED1 (via C-terminus); the interaction inhibits TESK1 kinase activity. Interacts (via C-terminus) with PARVA/PARVIN (via C-terminus); the interaction inhibits TESK1 kinase activity. Interacts with YWHAB/14-3-3 beta; the interaction is dependent on the phosphorylation of TESK1 Ser-439 and inhibits TESK1 kinase activity. Interacts with SPRY1, SPRY3 and SPRED2. Interacts (via C-terminus) with SPRY2 (via C-terminus); the interaction disrupts SPRY2 interaction with PPP2CA/PP2A-C, possibly by vesicular sequestration of SPRY2. Therefore dephosphorylation of SPRY2 by the serine/threonine-protein phosphatase 2A (PP2A) holoenzyme is lost, inhibiting its interaction with GRB2. It depends on Mg(2+) as a cofactor. The cofactor is Mn(2+). In terms of processing, autophosphorylated on serine and tyrosine residues. As to expression, weakly expressed in sciatic nerves (at protein level). Highly expressed in testicular germ cells. Expressed at low levels in brain, lung, heart, liver and kidney.

It is found in the cytoplasm. The protein localises to the perinuclear region. Its subcellular location is the cytoskeleton. It localises to the microtubule organizing center. The protein resides in the centrosome. It is found in the cell projection. The protein localises to the lamellipodium. The enzyme catalyses L-seryl-[protein] + ATP = O-phospho-L-seryl-[protein] + ADP + H(+). The catalysed reaction is L-threonyl-[protein] + ATP = O-phospho-L-threonyl-[protein] + ADP + H(+). It catalyses the reaction L-tyrosyl-[protein] + ATP = O-phospho-L-tyrosyl-[protein] + ADP + H(+). With respect to regulation, activated by autophosphorylation on Ser-215. Kinase activity is inhibited by SPRED1. Functionally, dual specificity protein kinase activity catalyzing autophosphorylation and phosphorylation of exogenous substrates on both serine/threonine and tyrosine residues. Regulates the cellular cytoskeleton by enhancing actin stress fiber formation via phosphorylation of cofilin and by preventing microtubule breakdown via inhibition of TAOK1/MARKK kinase activity. Inhibits podocyte motility via regulation of actin cytoskeletal dynamics and phosphorylation of CFL1. Positively regulates integrin-mediated cell spreading, via phosphorylation of cofilin. Suppresses ciliogenesis via multiple pathways; phosphorylation of CFL1, suppression of ciliary vesicle directional trafficking to the ciliary base, and by facilitating YAP1 nuclear localization where it acts as a transcriptional corepressor of the TEAD4 target genes AURKA and PLK1. Probably plays a central role at and after the meiotic phase of spermatogenesis. This is Dual specificity testis-specific protein kinase 1 (Tesk1) from Rattus norvegicus (Rat).